A 304-amino-acid chain; its full sequence is Sulfate adenylyltransferase subunit 2 (304 aa).

The protein belongs to the PAPS reductase family. CysD subfamily. Heterodimer composed of CysD, the smaller subunit, and CysN.

The catalysed reaction is sulfate + ATP + H(+) = adenosine 5'-phosphosulfate + diphosphate. It functions in the pathway sulfur metabolism; hydrogen sulfide biosynthesis; sulfite from sulfate: step 1/3. Its function is as follows. With CysN forms the ATP sulfurylase (ATPS) that catalyzes the adenylation of sulfate producing adenosine 5'-phosphosulfate (APS) and diphosphate, the first enzymatic step in sulfur assimilation pathway. APS synthesis involves the formation of a high-energy phosphoric-sulfuric acid anhydride bond driven by GTP hydrolysis by CysN coupled to ATP hydrolysis by CysD. This Acinetobacter baumannii (strain SDF) protein is Sulfate adenylyltransferase subunit 2.